The following is a 342-amino-acid chain: Trans-3-hydroxy-L-proline dehydratase (342 aa).

Residue Ser90 is the Proton acceptor of the active site. Residues 91–92 (GS), Asp251, and 256–257 (GT) each bind substrate.

The protein belongs to the proline racemase family.

The enzyme catalyses trans-3-hydroxy-L-proline = 1-pyrroline-2-carboxylate + H2O. Its function is as follows. Catalyzes the dehydration of trans-3-hydroxy-L-proline (t3LHyp) to Delta(1)-pyrroline-2-carboxylate (Pyr2C). Is likely involved in a degradation pathway that converts t3LHyp to L-proline, which would allow P.denitrificans to grow on t3LHyp as a sole carbon source. Displays neither proline racemase activity nor 4-hydroxyproline 2-epimerase activity. The polypeptide is Trans-3-hydroxy-L-proline dehydratase (Paracoccus denitrificans (strain Pd 1222)).